The chain runs to 206 residues: Large ribosomal subunit protein uL4 (206 aa).

The span at 42-54 (RRQQGTHQSQGRS) shows a compositional bias: polar residues. Residues 42–94 (RRQQGTHQSQGRSDVSRTGAKMFKQKGTGRARHSSARAPQFRGGGKAHGPVFR) are disordered. Basic residues predominate over residues 64-76 (FKQKGTGRARHSS).

This sequence belongs to the universal ribosomal protein uL4 family. As to quaternary structure, part of the 50S ribosomal subunit.

In terms of biological role, one of the primary rRNA binding proteins, this protein initially binds near the 5'-end of the 23S rRNA. It is important during the early stages of 50S assembly. It makes multiple contacts with different domains of the 23S rRNA in the assembled 50S subunit and ribosome. Its function is as follows. Forms part of the polypeptide exit tunnel. The sequence is that of Large ribosomal subunit protein uL4 from Bartonella tribocorum (strain CIP 105476 / IBS 506).